The sequence spans 383 residues: Chorismate synthase (383 aa).

Arg-48 serves as a coordination point for NADP(+). FMN is bound by residues 125 to 127 (RSS), Gly-286, 301 to 305 (HAPTS), and Arg-328. The interval 361 to 383 (PDRLDDNPGQYETEYHPSSPQTN) is disordered.

Belongs to the chorismate synthase family. It depends on FMNH2 as a cofactor.

It catalyses the reaction 5-O-(1-carboxyvinyl)-3-phosphoshikimate = chorismate + phosphate. Its pathway is metabolic intermediate biosynthesis; chorismate biosynthesis; chorismate from D-erythrose 4-phosphate and phosphoenolpyruvate: step 7/7. Its function is as follows. Catalyzes the anti-1,4-elimination of the C-3 phosphate and the C-6 proR hydrogen from 5-enolpyruvylshikimate-3-phosphate (EPSP) to yield chorismate, which is the branch point compound that serves as the starting substrate for the three terminal pathways of aromatic amino acid biosynthesis. This reaction introduces a second double bond into the aromatic ring system. The sequence is that of Chorismate synthase from Haloquadratum walsbyi (strain DSM 16790 / HBSQ001).